Here is a 392-residue protein sequence, read N- to C-terminus: Phosphopentomutase (392 aa).

6 residues coordinate Mn(2+): Asp-15, Asp-287, His-292, Asp-328, His-329, and His-340.

It belongs to the phosphopentomutase family. Mn(2+) is required as a cofactor.

Its subcellular location is the cytoplasm. It carries out the reaction 2-deoxy-alpha-D-ribose 1-phosphate = 2-deoxy-D-ribose 5-phosphate. The enzyme catalyses alpha-D-ribose 1-phosphate = D-ribose 5-phosphate. Its pathway is carbohydrate degradation; 2-deoxy-D-ribose 1-phosphate degradation; D-glyceraldehyde 3-phosphate and acetaldehyde from 2-deoxy-alpha-D-ribose 1-phosphate: step 1/2. Functionally, isomerase that catalyzes the conversion of deoxy-ribose 1-phosphate (dRib-1-P) and ribose 1-phosphate (Rib-1-P) to deoxy-ribose 5-phosphate (dRib-5-P) and ribose 5-phosphate (Rib-5-P), respectively. The polypeptide is Phosphopentomutase (Syntrophotalea carbinolica (strain DSM 2380 / NBRC 103641 / GraBd1) (Pelobacter carbinolicus)).